We begin with the raw amino-acid sequence, 230 residues long: Heptaprenylglyceryl phosphate synthase (230 aa).

Position 12 (lysine 12) interacts with sn-glycerol 1-phosphate. Mg(2+)-binding residues include aspartate 14 and threonine 40. Sn-glycerol 1-phosphate contacts are provided by residues 159 to 164 (YIEYSG), glycine 189, and 209 to 210 (GD).

This sequence belongs to the GGGP/HepGP synthase family. Group I subfamily. As to quaternary structure, homodimer. Mg(2+) serves as cofactor.

It carries out the reaction sn-glycerol 1-phosphate + all-trans-heptaprenyl diphosphate = 3-heptaprenyl-sn-glycero-1-phosphate + diphosphate. The protein operates within membrane lipid metabolism; glycerophospholipid metabolism. In terms of biological role, prenyltransferase that catalyzes in vivo the transfer of the heptaprenyl moiety of heptaprenyl pyrophosphate (HepPP; 35 carbon atoms) to the C3 hydroxyl of sn-glycerol-1-phosphate (G1P), producing heptaprenylglyceryl phosphate (HepGP). This reaction is an ether-bond-formation step in the biosynthesis of archaea-type G1P-based membrane lipids found in Bacillales. The protein is Heptaprenylglyceryl phosphate synthase of Staphylococcus aureus (strain bovine RF122 / ET3-1).